Reading from the N-terminus, the 96-residue chain is Phosphoribosyl-ATP pyrophosphatase (96 aa).

Belongs to the PRA-PH family.

The protein resides in the cytoplasm. The enzyme catalyses 1-(5-phospho-beta-D-ribosyl)-ATP + H2O = 1-(5-phospho-beta-D-ribosyl)-5'-AMP + diphosphate + H(+). Its pathway is amino-acid biosynthesis; L-histidine biosynthesis; L-histidine from 5-phospho-alpha-D-ribose 1-diphosphate: step 2/9. The polypeptide is Phosphoribosyl-ATP pyrophosphatase (Methanococcus vannielii (strain ATCC 35089 / DSM 1224 / JCM 13029 / OCM 148 / SB)).